A 575-amino-acid polypeptide reads, in one-letter code: E3 ubiquitin-protein ligase IpaH1.4 (575 aa).

An interaction with target proteins region spans residues 1-270 (MIKSTNIQAI…PDYSGPQIFF (270 aa)). LRR repeat units lie at residues 69–90 (LQNQ…PDLP), 91–115 (PQIT…MLKV), 117–130 (HAQF…PALP), 131–150 (ETLE…PFLP), 151–170 (ENLT…PLLP), 171–195 (PELK…KLEG), 197–209 (ALAN…LPEL), and 210–233 (PFSM…VLRL). Positions 271-281 (SMGNSATISAP) are linker. An E3 ubiquitin-protein ligase catalytic domain region spans residues 282-575 (EHSLADAVTA…LSENGSNHIA (294 aa)). Residues 284–575 (SLADAVTAWF…LSENGSNHIA (292 aa)) form the NEL domain. The active-site Glycyl thioester intermediate is the Cys368.

The protein belongs to the LRR-containing bacterial E3 ligase family. Interacts with human RBCK1/HOIL-1 and RNF31/HOIP components of the LUBAC complex. Ubiquitinated in the presence of host E1 ubiquitin-activating enzyme, E2 ubiquitin-conjugating enzyme and ubiquitin.

The protein resides in the secreted. Its subcellular location is the host cytoplasm. The catalysed reaction is S-ubiquitinyl-[E2 ubiquitin-conjugating enzyme]-L-cysteine + [acceptor protein]-L-lysine = [E2 ubiquitin-conjugating enzyme]-L-cysteine + N(6)-ubiquitinyl-[acceptor protein]-L-lysine.. It participates in protein modification; protein ubiquitination. With respect to regulation, exists in an autoinhibited state in the absence of substrate protein, probably due to interactions of the leucine-rich repeat domain with the catalytic domain. Is activated upon binding to a substrate protein. E3 ubiquitin-protein ligase effector that inhibits host cell innate immunity during bacterial infection by catalyzing 'Lys-48'-linked polyubiquitination and subsequent degradation of host RNF31/HOIP and RBCK1/HOIL-1. Host RNF31/HOIP is the catalytic component of the LUBAC complex, which conjugates linear ('Met-1'-linked) polyubiquitin chains at the surface of bacteria invading the host cytosol to form the ubiquitin coat surrounding bacteria. The bacterial ubiquitin coat acts as an 'eat-me' signal for xenophagy and promotes NF-kappa-B activation. By promoting degradation of host RNF31/HOIP, IpaH1.4 prevents formation of the bacterial ubiquitin coat and activation of host cell innate immunity. The protein is E3 ubiquitin-protein ligase IpaH1.4 of Shigella flexneri.